The sequence spans 322 residues: Probable cardiolipin synthase (CMP-forming) (322 aa).

3 helical membrane passes run 143 to 163, 199 to 219, and 289 to 309; these read IGYVIVQGDFTLGMSLLAFAG, LVISLCYTDLLPMWLMGIVVF, and LQGLWYLTGLTTAATALSYVM.

It belongs to the CDP-alcohol phosphatidyltransferase class-I family.

It is found in the mitochondrion inner membrane. It carries out the reaction a CDP-1,2-diacyl-sn-glycerol + a 1,2-diacyl-sn-glycero-3-phospho-(1'-sn-glycerol) = a cardiolipin + CMP + H(+). Functionally, catalyzes the synthesis of cardiolipin (CL) (diphosphatidylglycerol) by specifically transferring a phosphatidyl group from CDP-diacylglycerol to phosphatidylglycerol (PG). CL is a key phospholipid in mitochondrial membranes and plays important roles in maintaining the functional integrity and dynamics of mitochondria under both optimal and stress conditions. This Drosophila melanogaster (Fruit fly) protein is Probable cardiolipin synthase (CMP-forming) (CLS).